The primary structure comprises 480 residues: Type VI lipase adapter protein Tla3 (480 aa).

A disordered region spans residues 410-458 (ISSPTPGKKPVHDPFGVDLLPQTASGDGPPPSADPVAPASRLTTRLPPG).

In terms of assembly, interacts with the Tle3 toxin on one side and with the H2-T6SS component VgrG2b on the other side.

Its subcellular location is the cytoplasm. Its function is as follows. Adapter protein that targets and loads the Tle3 toxin onto the H2 type VI secretion system (H2-T6SS) machinery through an interaction with the TTR domain of VgrG2b. Seems specific for Tle3. This is Type VI lipase adapter protein Tla3 from Pseudomonas aeruginosa (strain ATCC 15692 / DSM 22644 / CIP 104116 / JCM 14847 / LMG 12228 / 1C / PRS 101 / PAO1).